The chain runs to 324 residues: DNA-directed RNA polymerase subunit alpha (324 aa).

Residues 1–230 are alpha N-terminal domain (alpha-NTD); the sequence is MQSSGLLKPR…EQLSVFADLE (230 aa). The tract at residues 244–324 is alpha C-terminal domain (alpha-CTD); it reads VDPVLLRPVD…NWPPAGLEKA (81 aa).

Belongs to the RNA polymerase alpha chain family. As to quaternary structure, homodimer. The RNAP catalytic core consists of 2 alpha, 1 beta, 1 beta' and 1 omega subunit. When a sigma factor is associated with the core the holoenzyme is formed, which can initiate transcription.

It carries out the reaction RNA(n) + a ribonucleoside 5'-triphosphate = RNA(n+1) + diphosphate. Functionally, DNA-dependent RNA polymerase catalyzes the transcription of DNA into RNA using the four ribonucleoside triphosphates as substrates. The sequence is that of DNA-directed RNA polymerase subunit alpha from Dechloromonas aromatica (strain RCB).